Here is a 68-residue protein sequence, read N- to C-terminus: Large ribosomal subunit protein bL32 (68 aa).

The protein belongs to the bacterial ribosomal protein bL32 family.

This is Large ribosomal subunit protein bL32 from Cereibacter sphaeroides (strain ATCC 17025 / ATH 2.4.3) (Rhodobacter sphaeroides).